Here is a 2099-residue protein sequence, read N- to C-terminus: Dedicator of cytokinesis protein 8 (2099 aa).

S20, S139, and S451 each carry phosphoserine. One can recognise a C2 DOCK-type domain in the interval 560 to 729; that stretch reads RNLLYVYPQR…GVFNIEVQAV (170 aa). 4 positions are modified to phosphoserine: S904, S936, S1145, and S1243. Residues 1632–2066 enclose the DOCKER domain; sequence KSYQASPDLR…LRPMIERKIP (435 aa). S2087 is subject to Phosphoserine.

The protein belongs to the DOCK family. In terms of assembly, interacts (via DOCKER domain) with GTPase CDC42; the interaction activates CDC42 by exchanging GDP for GTP. The unphosphorylated form interacts (via DOCKER domain) with LRCH1 (via LRR repeats); the interaction prevents the association between DOCK8 and CDC42. Interacts with CCDC88B. Post-translationally, in response to chemokine CXCL12/SDF-1-alpha stimulation, phosphorylated by PRKCA/PKC-alpha which promotes DOCK8 dissociation from LRCH1. As to expression, expressed in peripheral blood mononuclear cells (PBMCs).

It is found in the cytoplasm. The protein localises to the cell membrane. It localises to the cell projection. Its subcellular location is the lamellipodium membrane. Its function is as follows. Guanine nucleotide exchange factor (GEF) which specifically activates small GTPase CDC42 by exchanging bound GDP for free GTP. During immune responses, required for interstitial dendritic cell (DC) migration by locally activating CDC42 at the leading edge membrane of DC. Required for CD4(+) T-cell migration in response to chemokine stimulation by promoting CDC42 activation at T cell leading edge membrane. Is involved in NK cell cytotoxicity by controlling polarization of microtubule-organizing center (MTOC), and possibly regulating CCDC88B-mediated lytic granule transport to MTOC during cell killing. The chain is Dedicator of cytokinesis protein 8 (DOCK8) from Homo sapiens (Human).